A 461-amino-acid chain; its full sequence is Argininosuccinate lyase (461 aa).

Belongs to the lyase 1 family. Argininosuccinate lyase subfamily.

It is found in the cytoplasm. It carries out the reaction 2-(N(omega)-L-arginino)succinate = fumarate + L-arginine. It participates in amino-acid biosynthesis; L-arginine biosynthesis; L-arginine from L-ornithine and carbamoyl phosphate: step 3/3. The protein is Argininosuccinate lyase of Chloroflexus aurantiacus (strain ATCC 29366 / DSM 635 / J-10-fl).